We begin with the raw amino-acid sequence, 230 residues long: UPF0502 protein Patl_1161 (230 aa).

The protein belongs to the UPF0502 family.

The polypeptide is UPF0502 protein Patl_1161 (Pseudoalteromonas atlantica (strain T6c / ATCC BAA-1087)).